The primary structure comprises 268 residues: uncharacterized protein (268 aa).

Helical transmembrane passes span 32–52, 70–90, 125–145, and 237–257; these read SLLLISVFSTSFIVPLIIFFI, VFVGIPLGFGILNLVIFAFLF, GVSSMLFLAFTTPMVELFYIF, and IKYILFIAIFDIFLIILAYLT.

This sequence belongs to the CbiQ family.

It is found in the cell membrane. This is an uncharacterized protein from Methanocaldococcus jannaschii (strain ATCC 43067 / DSM 2661 / JAL-1 / JCM 10045 / NBRC 100440) (Methanococcus jannaschii).